A 452-amino-acid polypeptide reads, in one-letter code: MGKYFGTDGVRGEANVELTPEMAFKLGRFGGYVLSQHELETPKVYVGRDTRISGQMLASSLISGLLSVGIEVYDLGVIATPGVAYLVKKDGASAGVMISASHNPALDNGIKFFGGDGYKLEDEKELEIEALIDAKEDTLPRPSAQGLGMLHDYIEGVRKYQAFLKTTAEGDFEGYNVVLDTANGASYTSARAVFADLKANLTVIGENPDGLNINVKVGSTHPEAMAKKVVETGSDLGLAFDGDADRLIAVDENGEIVDGDKIMFIVGKYLLEQGKLAQDTLVTTVMSNLGFHLALEEAGINSVITAVGDRYVVEEMKKNNYNFGGEQSGHMIFLDYNTTGDGQLSAIQLLKVMRETGKTLSELASEVTIYPQKLVNVRVKDNAAKKSAMDVPAIQKVISEMETSMNGKGRILVRPSGTEPLLRVMAEAPTHEQVEHVVDTIVEVVEAEIGVK.

S101 acts as the Phosphoserine intermediate in catalysis. The Mg(2+) site is built by S101, D241, D243, and D245. Phosphoserine is present on S101.

This sequence belongs to the phosphohexose mutase family. Requires Mg(2+) as cofactor. Activated by phosphorylation.

It carries out the reaction alpha-D-glucosamine 1-phosphate = D-glucosamine 6-phosphate. Functionally, catalyzes the conversion of glucosamine-6-phosphate to glucosamine-1-phosphate. This is Phosphoglucosamine mutase from Lactococcus lactis subsp. cremoris (strain SK11).